The sequence spans 467 residues: Venom prothrombin activator pseutarin-C catalytic subunit (467 aa).

An N-terminal signal peptide occupies residues 1–22 (MAPQLLLCLILTFLWSLPEAES). A propeptide spanning residues 23–40 (NVFLKSKVANRFLQRTKR) is cleaved from the precursor. The Gla domain occupies 41–86 (ANSLVEEFKSGNIERECIEERCSKEEAREVFEDDEKTETFWNVYVD). A 4-carboxyglutamate mark is found at glutamate 46, glutamate 47, glutamate 54, glutamate 56, glutamate 59, glutamate 60, glutamate 65, glutamate 66, glutamate 69, and glutamate 72. Cysteine 57 and cysteine 62 form a disulfide bridge. One can recognise an EGF-like 1; calcium-binding domain in the interval 86–122 (DGDQCSSNPCHYRGICKDGIGSYTCTCLSGYEGKNCE). Intrachain disulfides connect cysteine 90–cysteine 101, cysteine 95–cysteine 110, cysteine 112–cysteine 121, cysteine 129–cysteine 140, cysteine 136–cysteine 149, cysteine 151–cysteine 164, cysteine 172–cysteine 329, cysteine 216–cysteine 221, cysteine 236–cysteine 252, cysteine 377–cysteine 391, and cysteine 402–cysteine 430. Serine 92 carries an O-linked (Hex...) serine glycan. The EGF-like 2 domain maps to 129–164 (CRVDNGNCWHFCKSVQNDIQCSCAEGYLLGEDGHSC). The propeptide at 182-209 (REASLPDFVQSHNATLLKKSDNPSPDIR) is activation peptide. The Peptidase S1 domain occupies 210–454 (IVNGMDCKLG…FIPWIKRIMR (245 aa)). Histidine 251 functions as the Charge relay system in the catalytic mechanism. A glycan (N-linked (GlcNAc...) asparagine) is linked at asparagine 254. The active-site Charge relay system is aspartate 309. Serine 406 serves as the catalytic Charge relay system.

The protein belongs to the peptidase S1 family. Snake venom subfamily. Heterodimer of a light and a heavy chains; disulfide-linked. Is associated with pseutarin-C non-catalytic subunit (AC Q7SZN0) in a non-covalent manner. In terms of processing, gamma-carboxyglutamate residues are formed by vitamin K dependent carboxylation. These residues are essential for the binding of calcium. Expressed by the venom gland.

It localises to the secreted. It catalyses the reaction Selective cleavage of Arg-|-Thr and then Arg-|-Ile bonds in prothrombin to form thrombin.. Activated by calcium and negatively charged phospholipids. In terms of biological role, snake prothrombin activator that attacks the hemostatic system of prey. This non-catalytic subunit is functionally similar to blood coagulation factor V. It serves as a critical cofactor for the prothrombinase activity of the catalytic subunit, which is similar to the blood coagulation factor X. The complex converts prothrombin to thrombin by sequential cleavage at two positions, Arg-320 followed by Arg-271. Cleavage at Arg-320 produces an active intermediate known as meizothrombin. Meizothrombin is the 'second' substrate for prothrombinase, and it docks in an altered manner to present the second cleavage site (271). Cleavage at Arg-271 releases active thrombin from its pro-fragment. This order of events is reversed if the protease component of prothrombinase is used on its own, suggesting that the 271 site is inherently more accessible to proteolysis. The complex converts prothrombin to thrombin in presence but also in the absence of membrane. The polypeptide is Venom prothrombin activator pseutarin-C catalytic subunit (Pseudonaja textilis (Eastern brown snake)).